We begin with the raw amino-acid sequence, 403 residues long: Phosphoglycerate kinase (403 aa).

Residues 21–23 (DFN), R36, 59–62 (HLGR), R119, and R159 contribute to the substrate site. ATP contacts are provided by residues K214, G301, E332, and 359 to 362 (GGDS).

The protein belongs to the phosphoglycerate kinase family. As to quaternary structure, monomer.

The protein localises to the cytoplasm. The catalysed reaction is (2R)-3-phosphoglycerate + ATP = (2R)-3-phospho-glyceroyl phosphate + ADP. Its pathway is carbohydrate degradation; glycolysis; pyruvate from D-glyceraldehyde 3-phosphate: step 2/5. In Lactobacillus delbrueckii subsp. lactis, this protein is Phosphoglycerate kinase.